Consider the following 460-residue polypeptide: MALNVVILAAGKGTRMRSDLPKVLHPIAHKSMVQHVIDTAHKVGSDAIQLVYGYGADKLQASLGEQQLNWVLQAEQLGTGHAVAQASPHIADSDTVLILYGDVPLIQQSTLEALLAARPENGVAILTVNLGNPMGYGRIVRTPCEGQEQGKVVGIIEQKDATAEQLLINEINTGIMAVPGKQLKAWLSRLSNNNAQGEYYLTDIIAMAHADGVAIDTAQPQSAIEVEGANNRVQLAQLERAYQAREAEKLMLAGANLRDPSRIDIRGDVTVGMDVMIDINVIFEGKVTLGNNVTIGAGAILIDCEIADNAEIKPYSIIEGAKLGVAASAGPFARLRPGAELKQDAHIGNFVEVKKAVIGVGSKAGHLAYLGDAIIGDGVNIGAGTITCNYDGANKHLTVIEDNVFVGSDTQLVAPVTIGKGATLGAGSTITRDVGENELVITRVKQKHLTGWQRPVKIKK.

Residues 1–232 are pyrophosphorylase; that stretch reads MALNVVILAA…AIEVEGANNR (232 aa). UDP-N-acetyl-alpha-D-glucosamine-binding positions include 8-11, Lys22, Gln73, 78-79, 100-102, Gly137, Glu157, Asn172, and Asn230; these read LAAG, GT, and YGD. Position 102 (Asp102) interacts with Mg(2+). Mg(2+) is bound at residue Asn230. Residues 233–253 form a linker region; sequence VQLAQLERAYQAREAEKLMLA. The tract at residues 254 to 460 is N-acetyltransferase; that stretch reads GANLRDPSRI…GWQRPVKIKK (207 aa). UDP-N-acetyl-alpha-D-glucosamine-binding residues include Arg336 and Lys354. His366 functions as the Proton acceptor in the catalytic mechanism. UDP-N-acetyl-alpha-D-glucosamine-binding residues include Tyr369 and Asn380. Residues Ala383, 389 to 390, Ser408, Ala426, and Arg443 each bind acetyl-CoA; that span reads NY.

The protein in the N-terminal section; belongs to the N-acetylglucosamine-1-phosphate uridyltransferase family. It in the C-terminal section; belongs to the transferase hexapeptide repeat family. In terms of assembly, homotrimer. The cofactor is Mg(2+).

The protein localises to the cytoplasm. It catalyses the reaction alpha-D-glucosamine 1-phosphate + acetyl-CoA = N-acetyl-alpha-D-glucosamine 1-phosphate + CoA + H(+). It carries out the reaction N-acetyl-alpha-D-glucosamine 1-phosphate + UTP + H(+) = UDP-N-acetyl-alpha-D-glucosamine + diphosphate. Its pathway is nucleotide-sugar biosynthesis; UDP-N-acetyl-alpha-D-glucosamine biosynthesis; N-acetyl-alpha-D-glucosamine 1-phosphate from alpha-D-glucosamine 6-phosphate (route II): step 2/2. It functions in the pathway nucleotide-sugar biosynthesis; UDP-N-acetyl-alpha-D-glucosamine biosynthesis; UDP-N-acetyl-alpha-D-glucosamine from N-acetyl-alpha-D-glucosamine 1-phosphate: step 1/1. The protein operates within bacterial outer membrane biogenesis; LPS lipid A biosynthesis. Catalyzes the last two sequential reactions in the de novo biosynthetic pathway for UDP-N-acetylglucosamine (UDP-GlcNAc). The C-terminal domain catalyzes the transfer of acetyl group from acetyl coenzyme A to glucosamine-1-phosphate (GlcN-1-P) to produce N-acetylglucosamine-1-phosphate (GlcNAc-1-P), which is converted into UDP-GlcNAc by the transfer of uridine 5-monophosphate (from uridine 5-triphosphate), a reaction catalyzed by the N-terminal domain. In Shewanella baltica (strain OS155 / ATCC BAA-1091), this protein is Bifunctional protein GlmU.